Reading from the N-terminus, the 674-residue chain is Probable potassium transport system protein Kup (674 aa).

12 consecutive transmembrane segments (helical) span residues 7 to 27 (IFWG…TSPL), 52 to 72 (LSLV…LIAL), 95 to 115 (WLIL…TLTP), 145 to 165 (LVTF…TSFI), 169 to 189 (FGPL…VNLI), 204 to 224 (LMLL…SVFL), 244 to 264 (IYLT…GQGA), 291 to 311 (VYLF…QALI), 342 to 362 (IYIR…LVYF), 368 to 388 (MEAA…ILLS), 397 to 417 (VVFN…FLIS), and 425 to 445 (GGYV…IWYF).

The protein belongs to the HAK/KUP transporter (TC 2.A.72) family.

The protein localises to the cell membrane. It carries out the reaction K(+)(in) + H(+)(in) = K(+)(out) + H(+)(out). Transport of potassium into the cell. Likely operates as a K(+):H(+) symporter. The protein is Probable potassium transport system protein Kup of Ligilactobacillus salivarius (strain UCC118) (Lactobacillus salivarius).